Reading from the N-terminus, the 895-residue chain is Isoleucine--tRNA ligase (895 aa).

Positions 57–67 match the 'HIGH' region motif; that stretch reads PYANGSIHVGH. Residue glutamate 549 coordinates L-isoleucyl-5'-AMP. The short motif at 590 to 594 is the 'KMSKS' region element; the sequence is KMSKS. Lysine 593 is an ATP binding site. Positions 869, 872, 888, and 891 each coordinate Zn(2+).

This sequence belongs to the class-I aminoacyl-tRNA synthetase family. IleS type 1 subfamily. In terms of assembly, monomer. The cofactor is Zn(2+).

The protein localises to the cytoplasm. The catalysed reaction is tRNA(Ile) + L-isoleucine + ATP = L-isoleucyl-tRNA(Ile) + AMP + diphosphate. Catalyzes the attachment of isoleucine to tRNA(Ile). As IleRS can inadvertently accommodate and process structurally similar amino acids such as valine, to avoid such errors it has two additional distinct tRNA(Ile)-dependent editing activities. One activity is designated as 'pretransfer' editing and involves the hydrolysis of activated Val-AMP. The other activity is designated 'posttransfer' editing and involves deacylation of mischarged Val-tRNA(Ile). The protein is Isoleucine--tRNA ligase of Mycoplasma genitalium (strain ATCC 33530 / DSM 19775 / NCTC 10195 / G37) (Mycoplasmoides genitalium).